The following is a 123-amino-acid chain: Small ribosomal subunit protein uS13 (123 aa).

The interval 95 to 123 is disordered; sequence GLPVRGQKTKTNARTRKGPKKAVASKKKK.

This sequence belongs to the universal ribosomal protein uS13 family. In terms of assembly, part of the 30S ribosomal subunit. Forms a loose heterodimer with protein S19. Forms two bridges to the 50S subunit in the 70S ribosome.

Located at the top of the head of the 30S subunit, it contacts several helices of the 16S rRNA. In the 70S ribosome it contacts the 23S rRNA (bridge B1a) and protein L5 of the 50S subunit (bridge B1b), connecting the 2 subunits; these bridges are implicated in subunit movement. Contacts the tRNAs in the A and P-sites. In Clostridium acetobutylicum (strain ATCC 824 / DSM 792 / JCM 1419 / IAM 19013 / LMG 5710 / NBRC 13948 / NRRL B-527 / VKM B-1787 / 2291 / W), this protein is Small ribosomal subunit protein uS13.